The following is a 373-amino-acid chain: S-adenosylmethionine:tRNA ribosyltransferase-isomerase (373 aa).

The protein belongs to the QueA family. In terms of assembly, monomer.

It localises to the cytoplasm. It catalyses the reaction 7-aminomethyl-7-carbaguanosine(34) in tRNA + S-adenosyl-L-methionine = epoxyqueuosine(34) in tRNA + adenine + L-methionine + 2 H(+). It participates in tRNA modification; tRNA-queuosine biosynthesis. Its function is as follows. Transfers and isomerizes the ribose moiety from AdoMet to the 7-aminomethyl group of 7-deazaguanine (preQ1-tRNA) to give epoxyqueuosine (oQ-tRNA). This Rhizobium etli (strain CIAT 652) protein is S-adenosylmethionine:tRNA ribosyltransferase-isomerase.